A 384-amino-acid polypeptide reads, in one-letter code: Probable protein phosphatase 2C 42 (384 aa).

Positions 58–358 (DFSMAVIQAN…DDITVIVVFL (301 aa)) constitute a PPM-type phosphatase domain. Mn(2+) is bound by residues Asp-89, Gly-90, Asp-290, and Asp-349.

The protein belongs to the PP2C family. Mg(2+) serves as cofactor. It depends on Mn(2+) as a cofactor.

The enzyme catalyses O-phospho-L-seryl-[protein] + H2O = L-seryl-[protein] + phosphate. It carries out the reaction O-phospho-L-threonyl-[protein] + H2O = L-threonyl-[protein] + phosphate. Dephosphorylates and represses plasma membrane H(+)-ATPases (PM H(+)-ATPases, e.g. AHA1 and AHA2), thus influencing negatively plant growth and fitness. Promotes the apical hook maintenance of etiolated seedlings. This chain is Probable protein phosphatase 2C 42, found in Arabidopsis thaliana (Mouse-ear cress).